The primary structure comprises 256 residues: MIIMDYYHMDIILYPNKNLQKSLTKRKCLKQPNIHSIKRLIFPPITETRLSKIMIDDESIKYITYNSSAQEITNIIMNNLENFPCPSHCSEEKWRLKSPDQRMKKLVITEMTAGVGGNVLNFAKYFKYVNAIELNCIRYKYLNNNIKLYDYSNVNCYNDNSVSLLIEKDDLGQDIVFFDPPWGGGGYKQFQNLRLDFDKYSVEVVCQKLLEKNHNKMVILKLPSNYDFDYFFDQLKSYTINKFDIEKMTIIVVKKY.

This is an uncharacterized protein from Acanthamoeba polyphaga mimivirus (APMV).